A 270-amino-acid polypeptide reads, in one-letter code: Zinc transporter ZupT (270 aa).

8 helical membrane-spanning segments follow: residues 8-28 (ILVVFLLTTLAGLATGIGGFI), 40-60 (LTFALGLSGGVMVYISLVELL), 78-98 (WIAIASFFGGIAVAALIDYLV), 131-151 (ILFALAIGIHNFPEGIATFAA), 162-182 (IALAVAVHNIPEGIAVAVPLY), 192-212 (LFYSFLSGLAEPVGAAIAMFF), 216-236 (FLTPTVLAVLFASVAGIMVFI), and 250-270 (HHHISIMGIIAGMLLMAIVLI). Positions 141 and 144 each coordinate Fe(2+). Residues E144 and H169 each contribute to the Zn(2+) site. N170, E173, and E202 together coordinate Fe(2+). Residue E173 participates in Zn(2+) binding.

It belongs to the ZIP transporter (TC 2.A.5) family. ZupT subfamily.

Its subcellular location is the cell membrane. The catalysed reaction is Zn(2+)(in) = Zn(2+)(out). Its function is as follows. Mediates zinc uptake. May also transport other divalent cations. In Akkermansia muciniphila (strain ATCC BAA-835 / DSM 22959 / JCM 33894 / BCRC 81048 / CCUG 64013 / CIP 107961 / Muc), this protein is Zinc transporter ZupT.